The following is a 114-amino-acid chain: Gamma-glutamylcyclotransferase family protein ytfP (114 aa).

This sequence belongs to the gamma-glutamylcyclotransferase family.

It localises to the cytoplasm. Functionally, may play a role in antibiotic biosynthesis. This chain is Gamma-glutamylcyclotransferase family protein ytfP (ytfP), found in Citrobacter rodentium (strain ICC168) (Citrobacter freundii biotype 4280).